The primary structure comprises 304 residues: Oxygen-dependent coproporphyrinogen-III oxidase (304 aa).

Serine 94 serves as a coordination point for substrate. Positions 98 and 108 each coordinate a divalent metal cation. Histidine 108 functions as the Proton donor in the catalytic mechanism. Residue 110 to 112 (NVR) coordinates substrate. Positions 147 and 177 each coordinate a divalent metal cation. The important for dimerization stretch occupies residues 242–277 (YVEFNLVWDRGTLFGLQSGGRTESVLMSMPPLARWQ). 260–262 (GGR) is a substrate binding site.

It belongs to the aerobic coproporphyrinogen-III oxidase family. As to quaternary structure, homodimer. A divalent metal cation is required as a cofactor.

The protein localises to the cytoplasm. The enzyme catalyses coproporphyrinogen III + O2 + 2 H(+) = protoporphyrinogen IX + 2 CO2 + 2 H2O. The protein operates within porphyrin-containing compound metabolism; protoporphyrin-IX biosynthesis; protoporphyrinogen-IX from coproporphyrinogen-III (O2 route): step 1/1. Functionally, involved in the heme biosynthesis. Catalyzes the aerobic oxidative decarboxylation of propionate groups of rings A and B of coproporphyrinogen-III to yield the vinyl groups in protoporphyrinogen-IX. The chain is Oxygen-dependent coproporphyrinogen-III oxidase from Sodalis glossinidius (strain morsitans).